The primary structure comprises 415 residues: Serine--tRNA ligase (415 aa).

231-233 (TAE) serves as a coordination point for L-serine. 262 to 264 (RSE) is a binding site for ATP. Glu-285 is an L-serine binding site. 349–352 (EISS) is a binding site for ATP. Ser-383 is an L-serine binding site.

This sequence belongs to the class-II aminoacyl-tRNA synthetase family. Type-1 seryl-tRNA synthetase subfamily. As to quaternary structure, homodimer. The tRNA molecule binds across the dimer.

Its subcellular location is the cytoplasm. The enzyme catalyses tRNA(Ser) + L-serine + ATP = L-seryl-tRNA(Ser) + AMP + diphosphate + H(+). It carries out the reaction tRNA(Sec) + L-serine + ATP = L-seryl-tRNA(Sec) + AMP + diphosphate + H(+). It functions in the pathway aminoacyl-tRNA biosynthesis; selenocysteinyl-tRNA(Sec) biosynthesis; L-seryl-tRNA(Sec) from L-serine and tRNA(Sec): step 1/1. Functionally, catalyzes the attachment of serine to tRNA(Ser). Is also able to aminoacylate tRNA(Sec) with serine, to form the misacylated tRNA L-seryl-tRNA(Sec), which will be further converted into selenocysteinyl-tRNA(Sec). The polypeptide is Serine--tRNA ligase (Helicobacter pylori (strain G27)).